A 180-amino-acid chain; its full sequence is Cytochrome b6-f complex iron-sulfur subunit (180 aa).

The chain crosses the membrane as a helical span at residues 21–43; the sequence is LLTFGTITGTALGALYPVVKYFI. The Rieske domain maps to 66 to 162; that stretch reads VSEYLAKHLP…ATVTEDDKLV (97 aa). The [2Fe-2S] cluster site is built by Cys108, His110, Cys126, and His129. The cysteines at positions 113 and 128 are disulfide-linked.

This sequence belongs to the Rieske iron-sulfur protein family. In terms of assembly, the 4 large subunits of the cytochrome b6-f complex are cytochrome b6, subunit IV (17 kDa polypeptide, PetD), cytochrome f and the Rieske protein, while the 4 small subunits are PetG, PetL, PetM and PetN. The complex functions as a dimer. [2Fe-2S] cluster serves as cofactor.

The protein resides in the cellular thylakoid membrane. The catalysed reaction is 2 oxidized [plastocyanin] + a plastoquinol + 2 H(+)(in) = 2 reduced [plastocyanin] + a plastoquinone + 4 H(+)(out). Functionally, component of the cytochrome b6-f complex, which mediates electron transfer between photosystem II (PSII) and photosystem I (PSI), cyclic electron flow around PSI, and state transitions. The chain is Cytochrome b6-f complex iron-sulfur subunit from Thermosynechococcus vestitus (strain NIES-2133 / IAM M-273 / BP-1).